Consider the following 2690-residue polypeptide: Probable polyketide synthase 28 (2690 aa).

The 429-residue stretch at 15 to 443 (YGDVAVIGIG…GSNVCLILSE (429 aa)) folds into the Ketosynthase family 3 (KS3) domain. Catalysis depends on for beta-ketoacyl synthase activity residues Cys187, His326, and His366. An acyl/malonyl transferases region spans residues 651–684 (GVSADIIVGHSLGELSSSYSSGMIDFETLCHLIY). The For acyl/malonyl transferase activity role is filled by Ser661. A coiled-coil region spans residues 906–934 (NFKSQLTNINNNNNNINNNNNNNNNNNNN). Residues 916 to 946 (NNNNNINNNNNNNNNNNNNNNNNNNNNNNNN) are disordered. Positions 973-1102 (HEKITNEGPS…GNFSLFKHNS (130 aa)) are N-terminal hotdog fold. The PKS/mFAS DH domain maps to 973-1285 (HEKITNEGPS…CSSVSLANPS (313 aa)). His1014 functions as the Proton acceptor; for dehydratase activity in the catalytic mechanism. The interval 1119–1285 (NFTTISKHDF…CSSVSLANPS (167 aa)) is C-terminal hotdog fold. Asp1188 functions as the Proton donor; for dehydratase activity in the catalytic mechanism. The disordered stretch occupies residues 1401-1429 (LNHHNNSENKNKNNNNNNNSNNNENSNNE). Positions 1412 to 1429 (KNNNNNNNSNNNENSNNE) are enriched in low complexity. A Carrier domain is found at 2594 to 2671 (SDNEFIHSTI…QSIDIIKFGY (78 aa)). An O-(pantetheine 4'-phosphoryl)serine modification is found at Ser2631.

The cofactor is pantetheine 4'-phosphate.

In terms of biological role, probable polyketide synthase. The polypeptide is Probable polyketide synthase 28 (pks28) (Dictyostelium discoideum (Social amoeba)).